The chain runs to 450 residues: Tubulin alpha-3E chain (450 aa).

The short motif at 1–4 is the MREC motif element; that stretch reads MREC. Residue Q11 coordinates GTP. The residue at position 40 (K40) is an N6-acetyllysine. GTP contacts are provided by E71, S140, G144, T145, T179, N206, and N228. E71 is a binding site for Mg(2+). E254 is a catalytic residue. Y282 is modified (3'-nitrotyrosine). Position 439 is a phosphoserine (S439). A 3'-nitrotyrosine modification is found at Y450.

Belongs to the tubulin family. In terms of assembly, dimer of alpha and beta chains. A typical microtubule is a hollow water-filled tube with an outer diameter of 25 nm and an inner diameter of 15 nM. Alpha-beta heterodimers associate head-to-tail to form protofilaments running lengthwise along the microtubule wall with the beta-tubulin subunit facing the microtubule plus end conferring a structural polarity. Microtubules usually have 13 protofilaments but different protofilament numbers can be found in some organisms and specialized cells. Requires Mg(2+) as cofactor. Some glutamate residues at the C-terminus are polyglutamylated, resulting in polyglutamate chains on the gamma-carboxyl group. Polyglutamylation plays a key role in microtubule severing by spastin (SPAST). SPAST preferentially recognizes and acts on microtubules decorated with short polyglutamate tails: severing activity by SPAST increases as the number of glutamates per tubulin rises from one to eight, but decreases beyond this glutamylation threshold. Glutamylation is also involved in cilia motility. Post-translationally, some glutamate residues at the C-terminus are monoglycylated but not polyglycylated due to the absence of functional TTLL10 in human. Monoglycylation is mainly limited to tubulin incorporated into cilia and flagella axonemes, which is required for their stability and maintenance. Flagella glycylation controls sperm motility. Both polyglutamylation and monoglycylation can coexist on the same protein on adjacent residues, and lowering glycylation levels increases polyglutamylation, and reciprocally. In terms of processing, acetylation of alpha chains at Lys-40 is located inside the microtubule lumen. This modification has been correlated with increased microtubule stability, intracellular transport and ciliary assembly. Methylation of alpha chains at Lys-40 is found in mitotic microtubules and is required for normal mitosis and cytokinesis contributing to genomic stability. Post-translationally, nitration of Tyr-450 is irreversible and interferes with normal dynein intracellular distribution. In terms of processing, undergoes a tyrosination/detyrosination cycle, the cyclic removal and re-addition of a C-terminal tyrosine residue by the enzymes tubulin tyrosine carboxypeptidase (MATCAP1/KIAA0895L, VASH1 or VASH2) and tubulin tyrosine ligase (TTL), respectively. Tyrosination promotes microtubule interaction with CAP-Gly domain-containing proteins such as CLIP1, CLIP2 and DCTN1. Tyrosination regulates the initiation of dynein-dynactin motility via interaction with DCTN1, which brings the dynein-dynactin complex into contact with microtubules. In neurons, tyrosinated tubulins mediate the initiation of retrograde vesicle transport. Post-translationally, detyrosination is involved in metaphase plate congression by guiding chromosomes during mitosis: detyrosination promotes interaction with CENPE, promoting pole-proximal transport of chromosomes toward the equator. Detyrosination increases microtubules-dependent mechanotransduction in dystrophic cardiac and skeletal muscle. In cardiomyocytes, detyrosinated microtubules are required to resist to contractile compression during contraction: detyrosination promotes association with desmin (DES) at force-generating sarcomeres, leading to buckled microtubules and mechanical resistance to contraction.

Its subcellular location is the cytoplasm. The protein localises to the cytoskeleton. The enzyme catalyses GTP + H2O = GDP + phosphate + H(+). Tubulin is the major constituent of microtubules, a cylinder consisting of laterally associated linear protofilaments composed of alpha- and beta-tubulin heterodimers. Microtubules grow by the addition of GTP-tubulin dimers to the microtubule end, where a stabilizing cap forms. Below the cap, tubulin dimers are in GDP-bound state, owing to GTPase activity of alpha-tubulin. The chain is Tubulin alpha-3E chain (TUBA3E) from Homo sapiens (Human).